Here is a 400-residue protein sequence, read N- to C-terminus: Putative niacin/nicotinamide transporter NiaP (400 aa).

The Cytoplasmic segment spans residues 1–14; that stretch reads MGKQQPISQRKLLG. A helical transmembrane segment spans residues 15–35; sequence VAGLGWLFDAMDVGILSFIIA. Over 36–49 the chain is Extracellular; sequence ALHVEWNLSPEEMK. The helical transmembrane segment at 50–70 threads the bilayer; the sequence is WIGSVNSIGMAAGAFLFGLLA. Residues 71 to 77 are Cytoplasmic-facing; that stretch reads DRIGRKK. The next 2 membrane-spanning stretches (helical) occupy residues 78–98 and 99–119; these read VFII…FVTS and LSAF…ELPV. Over 120 to 142 the chain is Cytoplasmic; the sequence is ASTLVSEAVVPEKRGRVIVLLES. A helical transmembrane segment spans residues 143 to 163; the sequence is FWAVGWLAAALISYFVIPSFG. Over 164-165 the chain is Extracellular; the sequence is WQ. The helical transmembrane segment at 166–186 threads the bilayer; sequence AALLLTALTAFYALYLRTSLP. At 187–217 the chain is on the cytoplasmic side; that stretch reads DSPKYESLSAKKRSMWENVKSVWARQYIRPT. Residues 218 to 238 form a helical membrane-spanning segment; the sequence is VMLSIVWFCVVFSYYGMFLWL. Over 239 to 253 the chain is Extracellular; sequence PSVMLLKGFSMIQSF. Residues 254-274 traverse the membrane as a helical segment; sequence EYVLLMTLAQLPGYFSAAWLI. The Cytoplasmic segment spans residues 275 to 280; it reads EKAGRK. The chain crosses the membrane as a helical span at residues 281 to 301; that stretch reads WILVVYLIGTAGSAYFFGTAD. Residues 302–304 lie on the Extracellular side of the membrane; the sequence is SLS. The helical transmembrane segment at 305–325 threads the bilayer; it reads LLLTAGVLLSFFNLGAWGVLY. The Cytoplasmic segment spans residues 326-343; sequence AYTPEQYPTAIRATGSGT. Residues 344 to 364 traverse the membrane as a helical segment; sequence TAAFGRIGGIFGPLLVGTLAA. Over 365–370 the chain is Extracellular; the sequence is RHISFS. Residues 371 to 391 traverse the membrane as a helical segment; sequence VIFSIFCIAILLAVACILIMG. At 392–400 the chain is on the cytoplasmic side; that stretch reads KETKQTELE.

The protein belongs to the major facilitator superfamily. Sugar transporter (TC 2.A.1.1) family.

The protein resides in the cell membrane. Functionally, probably involved in the uptake of amidated and deamidated forms of niacin. Increases the growth rate of E.coli that is unable to make niacin de novo; confers increased sensitivity to the toxic niacin analog 6-amino-nicotinamide to wild-type E.coli. There is probably another mechanism for niacin uptake. This chain is Putative niacin/nicotinamide transporter NiaP, found in Bacillus subtilis (strain 168).